Consider the following 456-residue polypeptide: MSARLAAIVLAAGKGTRMRSTLPKVLHPLAGSTILERVLAALGELALAECFIVVGQGAELVRGRIARPGVQFVEQTEQRGTGHAVQQVIPHLEGFEGEVLVLNGDAPLLRPSTVAHLVEKHRSFAADATILAARIADPGGYGRVFLDADGRVRQVIEDRDCTEEQRRNDLINGGVYCFRWPALMTVLPALSADNDQGELYLPDALPMLTHVRAVAVEDPQEIFGINDRLQLSQASRILNERTLVGLMLSGVTIVDPLRVTIDETVEIEPDVVIEPETHLRGATRIAGGCRIGPGTLLEDTVVGAGTEILYSVLRRSRVGAHSTIGPYSHLRPGADVGSHCRVGNYVEIKNATIGDHTNAAHLSYVGDASVGERVNFGAGTIVVNYDGKHKHRTEIGDGVRTGANSCLVAPLKLGDGVTVAAGSTVTEDVPCGLVIARSRQVVKPDWKAPYERTEDG.

The pyrophosphorylase stretch occupies residues Met1–Arg228. UDP-N-acetyl-alpha-D-glucosamine-binding positions include Leu10–Gly13, Lys24, Gln75, and Gly80–Thr81. Asp105 provides a ligand contact to Mg(2+). UDP-N-acetyl-alpha-D-glucosamine-binding residues include Gly142, Glu157, Asn172, and Asn226. Mg(2+) is bound at residue Asn226. Positions Leu229–Ser249 are linker. The segment at Gly250–Gly456 is N-acetyltransferase. Residues Arg331 and Lys349 each contribute to the UDP-N-acetyl-alpha-D-glucosamine site. The Proton acceptor role is filled by His361. Positions 364 and 375 each coordinate UDP-N-acetyl-alpha-D-glucosamine. Acetyl-CoA contacts are provided by residues Ala378, Asn384–Tyr385, Ala421, and Arg437.

In the N-terminal section; belongs to the N-acetylglucosamine-1-phosphate uridyltransferase family. The protein in the C-terminal section; belongs to the transferase hexapeptide repeat family. As to quaternary structure, homotrimer. It depends on Mg(2+) as a cofactor.

The protein resides in the cytoplasm. It carries out the reaction alpha-D-glucosamine 1-phosphate + acetyl-CoA = N-acetyl-alpha-D-glucosamine 1-phosphate + CoA + H(+). It catalyses the reaction N-acetyl-alpha-D-glucosamine 1-phosphate + UTP + H(+) = UDP-N-acetyl-alpha-D-glucosamine + diphosphate. It participates in nucleotide-sugar biosynthesis; UDP-N-acetyl-alpha-D-glucosamine biosynthesis; N-acetyl-alpha-D-glucosamine 1-phosphate from alpha-D-glucosamine 6-phosphate (route II): step 2/2. The protein operates within nucleotide-sugar biosynthesis; UDP-N-acetyl-alpha-D-glucosamine biosynthesis; UDP-N-acetyl-alpha-D-glucosamine from N-acetyl-alpha-D-glucosamine 1-phosphate: step 1/1. It functions in the pathway bacterial outer membrane biogenesis; LPS lipid A biosynthesis. Functionally, catalyzes the last two sequential reactions in the de novo biosynthetic pathway for UDP-N-acetylglucosamine (UDP-GlcNAc). The C-terminal domain catalyzes the transfer of acetyl group from acetyl coenzyme A to glucosamine-1-phosphate (GlcN-1-P) to produce N-acetylglucosamine-1-phosphate (GlcNAc-1-P), which is converted into UDP-GlcNAc by the transfer of uridine 5-monophosphate (from uridine 5-triphosphate), a reaction catalyzed by the N-terminal domain. The sequence is that of Bifunctional protein GlmU from Gloeobacter violaceus (strain ATCC 29082 / PCC 7421).